A 365-amino-acid polypeptide reads, in one-letter code: Chorismate synthase (365 aa).

Position 48 (R48) interacts with NADP(+). Residues 125–127 (RSS), 238–239 (NA), G278, 293–297 (KPTSS), and R319 contribute to the FMN site.

The protein belongs to the chorismate synthase family. In terms of assembly, homotetramer. FMNH2 is required as a cofactor.

The catalysed reaction is 5-O-(1-carboxyvinyl)-3-phosphoshikimate = chorismate + phosphate. The protein operates within metabolic intermediate biosynthesis; chorismate biosynthesis; chorismate from D-erythrose 4-phosphate and phosphoenolpyruvate: step 7/7. Catalyzes the anti-1,4-elimination of the C-3 phosphate and the C-6 proR hydrogen from 5-enolpyruvylshikimate-3-phosphate (EPSP) to yield chorismate, which is the branch point compound that serves as the starting substrate for the three terminal pathways of aromatic amino acid biosynthesis. This reaction introduces a second double bond into the aromatic ring system. The sequence is that of Chorismate synthase from Marinomonas sp. (strain MWYL1).